The primary structure comprises 126 residues: C2H2-type zinc-finger transcription factor M5 (126 aa).

2 disordered regions span residues 17 to 52 (AQPD…NDNR) and 103 to 126 (EKKS…RVKD). Positions 38-48 (SNGSSSGTATD) are enriched in polar residues. The segment at 51-76 (NRCWDHGCNGKKFLNHSNLVRHRREN) adopts a C2H2-type 1; degenerate zinc-finger fold. The C2H2-type 2; degenerate zinc-finger motif lies at 83 to 115 (FTCPMCGAYFSRSTARNQHLEKKSCNRVRRYSN). A compositionally biased stretch (basic and acidic residues) spans 115–126 (NGRERPRPRVKD).

The protein belongs to the GLI C2H2-type zinc-finger protein family.

It is found in the nucleus. Transcription factor that probably regulates the expression of the gene cluster that mediates the biosynthesis of squalestatin S1 (SQS1, also known as zaragozic acid A), a heavily oxidized fungal polyketide that offers potent cholesterol lowering activity by targeting squalene synthase (SS). This chain is C2H2-type zinc-finger transcription factor M5, found in Phoma sp. (strain ATCC 20986 / MF5453).